A 138-amino-acid chain; its full sequence is Small ribosomal subunit protein uS11 (138 aa).

Residues 1-12 (MAPKKPGAAGPK) are compositionally biased toward low complexity. Disordered stretches follow at residues 1 to 27 (MAPK…NVPH) and 119 to 138 (ISDV…RRRV). Positions 13–22 (KAQKTRRREK) are enriched in basic residues.

It belongs to the universal ribosomal protein uS11 family. Part of the 30S ribosomal subunit. Interacts with proteins S7 and S18. Binds to IF-3.

Functionally, located on the platform of the 30S subunit, it bridges several disparate RNA helices of the 16S rRNA. Forms part of the Shine-Dalgarno cleft in the 70S ribosome. The sequence is that of Small ribosomal subunit protein uS11 from Mycobacteroides abscessus (strain ATCC 19977 / DSM 44196 / CCUG 20993 / CIP 104536 / JCM 13569 / NCTC 13031 / TMC 1543 / L948) (Mycobacterium abscessus).